A 46-amino-acid chain; its full sequence is Viscotoxin-1-PS (46 aa).

Disulfide bonds link C3/C40, C4/C32, and C16/C26.

This sequence belongs to the plant thionin (TC 1.C.44) family.

The protein localises to the secreted. In terms of biological role, thionins are small plant proteins which are toxic to animal cells. They seem to exert their toxic effect at the level of the cell membrane. Their precise function is not known. In Viscum album (European mistletoe), this protein is Viscotoxin-1-PS (THI2.4).